A 349-amino-acid chain; its full sequence is Probable tRNA pseudouridine synthase B (349 aa).

Aspartate 41 serves as the catalytic Nucleophile. Residues 207-279 (YPKVIVKETA…KVIDIDNVLI (73 aa)) enclose the PUA domain. Residues 300–309 (IPVQKPERKL) are compositionally biased toward basic and acidic residues. The tract at residues 300 to 349 (IPVQKPERKLHGNLQGSQEWKDTGNRGNPKRGGTGSKGFSSGFRKRKAKR) is disordered.

Belongs to the pseudouridine synthase TruB family. Type 2 subfamily.

The catalysed reaction is uridine(55) in tRNA = pseudouridine(55) in tRNA. Its function is as follows. Could be responsible for synthesis of pseudouridine from uracil-55 in the psi GC loop of transfer RNAs. The protein is Probable tRNA pseudouridine synthase B of Picrophilus torridus (strain ATCC 700027 / DSM 9790 / JCM 10055 / NBRC 100828 / KAW 2/3).